Here is an 810-residue protein sequence, read N- to C-terminus: Glycerol-3-phosphate acyltransferase (810 aa).

Residues 305–310 carry the HXXXXD motif motif; the sequence is CHRSHI.

This sequence belongs to the GPAT/DAPAT family.

Its subcellular location is the cell inner membrane. The catalysed reaction is sn-glycerol 3-phosphate + an acyl-CoA = a 1-acyl-sn-glycero-3-phosphate + CoA. It functions in the pathway phospholipid metabolism; CDP-diacylglycerol biosynthesis; CDP-diacylglycerol from sn-glycerol 3-phosphate: step 1/3. In Haemophilus influenzae (strain PittEE), this protein is Glycerol-3-phosphate acyltransferase.